Here is a 562-residue protein sequence, read N- to C-terminus: Protein TBF1 (562 aa).

A disordered region spans residues 376–414 (ASMSNSSSGPHSSHNNSSNSNNNGSIGLRKPKAKRTWSK). The span at 377–400 (SMSNSSSGPHSSHNNSSNSNNNGS) shows a compositional bias: low complexity. An HTH myb-type domain is found at 404 to 460 (RKPKAKRTWSKEEEEALVEGLKEVGPSWSKILDLYGPGGKITENLKNRTQVQLKDKA). The segment at residues 431–456 (WSKILDLYGPGGKITENLKNRTQVQL) is a DNA-binding region (H-T-H motif). A disordered region spans residues 495 to 562 (FSQSPNSSTI…GFDPHLEDGM (68 aa)). Polar residues-rich tracts occupy residues 496–522 (SQSPNSSTIMEQNLSQHPSSAASATED) and 532–552 (GQNSDNMPSNGLFGNSTSDNT).

Homodimer.

Its subcellular location is the nucleus. The protein resides in the chromosome. The protein localises to the telomere. Functionally, binds the telomeric double-stranded TTAGGG repeat and negatively regulates telomere length. Involved in the regulation of gene expression. 52 binding sites have been identified, distributed over 15 chromosomes. A member of the general regulatory factors (GRFs) which act as genome partitioners. Acts as a chromatin insulator which are known as STARs (Subtelomeric anti-silencing region). STARs prevent negative or positive transcription influence by extending across chromatin to a promoter. The chain is Protein TBF1 (TBF1) from Saccharomyces cerevisiae (strain ATCC 204508 / S288c) (Baker's yeast).